The chain runs to 701 residues: Polyribonucleotide nucleotidyltransferase (701 aa).

Asp487 and Asp493 together coordinate Mg(2+). Residues 553-612 (PRLYTLRINPDKIRDVIGKGGSVIRALTEETGTSIDIAEDGLITIASVSAEGAEEAKRRI) form the KH domain. Residues 622 to 692 (GKIYEGTVVK…ERGRIRLSIK (71 aa)) enclose the S1 motif domain.

The protein belongs to the polyribonucleotide nucleotidyltransferase family. Mg(2+) is required as a cofactor.

It is found in the cytoplasm. It catalyses the reaction RNA(n+1) + phosphate = RNA(n) + a ribonucleoside 5'-diphosphate. Involved in mRNA degradation. Catalyzes the phosphorolysis of single-stranded polyribonucleotides processively in the 3'- to 5'-direction. The protein is Polyribonucleotide nucleotidyltransferase of Laribacter hongkongensis (strain HLHK9).